A 279-amino-acid polypeptide reads, in one-letter code: Large ribosomal subunit protein uL2 (279 aa).

The disordered stretch occupies residues 218 to 279; it reads RPQTRGSAMN…ITRRKSNPKR (62 aa). A compositionally biased stretch (basic residues) spans 255 to 279; the sequence is KGSKTRRKKASDKLIITRRKSNPKR.

It belongs to the universal ribosomal protein uL2 family. In terms of assembly, part of the 50S ribosomal subunit. Forms a bridge to the 30S subunit in the 70S ribosome.

Its function is as follows. One of the primary rRNA binding proteins. Required for association of the 30S and 50S subunits to form the 70S ribosome, for tRNA binding and peptide bond formation. It has been suggested to have peptidyltransferase activity; this is somewhat controversial. Makes several contacts with the 16S rRNA in the 70S ribosome. The chain is Large ribosomal subunit protein uL2 from Sulfurimonas denitrificans (strain ATCC 33889 / DSM 1251) (Thiomicrospira denitrificans (strain ATCC 33889 / DSM 1251)).